A 94-amino-acid chain; its full sequence is Small ribosomal subunit protein bS6 (94 aa).

Belongs to the bacterial ribosomal protein bS6 family.

Its function is as follows. Binds together with bS18 to 16S ribosomal RNA. The chain is Small ribosomal subunit protein bS6 from Alkaliphilus oremlandii (strain OhILAs) (Clostridium oremlandii (strain OhILAs)).